The following is a 191-amino-acid chain: Protein YceI (191 aa).

Residues 1 to 22 (MKKNLLGFTLASLLFTTGSAVA) form the signal peptide.

Belongs to the UPF0312 family. Type 1 subfamily.

The protein resides in the periplasm. In Salmonella dublin (strain CT_02021853), this protein is Protein YceI.